The following is a 403-amino-acid chain: Argininosuccinate synthase (403 aa).

Residues 10–18 (AYSGGVDTS) and alanine 38 each bind ATP. Tyrosine 89 contributes to the L-citrulline binding site. Glycine 119 lines the ATP pocket. L-aspartate is bound by residues threonine 121, asparagine 125, and aspartate 126. Asparagine 125 is a binding site for L-citrulline. Residues arginine 129, serine 177, serine 186, glutamate 262, and tyrosine 274 each coordinate L-citrulline.

Belongs to the argininosuccinate synthase family. Type 1 subfamily. As to quaternary structure, homotetramer.

The protein localises to the cytoplasm. The enzyme catalyses L-citrulline + L-aspartate + ATP = 2-(N(omega)-L-arginino)succinate + AMP + diphosphate + H(+). It participates in amino-acid biosynthesis; L-arginine biosynthesis; L-arginine from L-ornithine and carbamoyl phosphate: step 2/3. The sequence is that of Argininosuccinate synthase from Synechococcus sp. (strain CC9605).